The sequence spans 571 residues: Proline--tRNA ligase (571 aa).

It belongs to the class-II aminoacyl-tRNA synthetase family. ProS type 1 subfamily. In terms of assembly, homodimer.

The protein resides in the cytoplasm. The enzyme catalyses tRNA(Pro) + L-proline + ATP = L-prolyl-tRNA(Pro) + AMP + diphosphate. Its function is as follows. Catalyzes the attachment of proline to tRNA(Pro) in a two-step reaction: proline is first activated by ATP to form Pro-AMP and then transferred to the acceptor end of tRNA(Pro). As ProRS can inadvertently accommodate and process non-cognate amino acids such as alanine and cysteine, to avoid such errors it has two additional distinct editing activities against alanine. One activity is designated as 'pretransfer' editing and involves the tRNA(Pro)-independent hydrolysis of activated Ala-AMP. The other activity is designated 'posttransfer' editing and involves deacylation of mischarged Ala-tRNA(Pro). The misacylated Cys-tRNA(Pro) is not edited by ProRS. The chain is Proline--tRNA ligase from Acinetobacter baumannii (strain ATCC 17978 / DSM 105126 / CIP 53.77 / LMG 1025 / NCDC KC755 / 5377).